Reading from the N-terminus, the 473-residue chain is Dol-P-Glc:Glc(2)Man(9)GlcNAc(2)-PP-Dol alpha-1,2-glucosyltransferase (473 aa).

Over 1 to 6 the chain is Cytoplasmic; sequence MAQLEG. Residues 7 to 27 traverse the membrane as a helical segment; sequence YCFSAALSCTFLVSCLLFSAF. At 28-64 the chain is on the extracellular side; it reads SRALREPYMDEIFHLPQAQRYCEGHFSLSQWDPMITT. Residues 65–85 form a helical membrane-spanning segment; sequence LPGLYLVSVGVVKPAIWIFAW. Topologically, residues 86 to 97 are cytoplasmic; sequence SEHVVCSIGMLR. A helical transmembrane segment spans residues 98 to 118; the sequence is FVNLLFSVGNFYLLYLLFHKV. Topologically, residues 119-126 are extracellular; sequence QPRNKAAS. Residues 127–147 traverse the membrane as a helical segment; the sequence is SIQRVLSTLTLAVFPTLYFFN. Residues 148–150 are Cytoplasmic-facing; that stretch reads FLY. The helical transmembrane segment at 151-171 threads the bilayer; sequence YTEAGSMFFTLFAYLMCLYGN. At 172 to 175 the chain is on the extracellular side; it reads HKTS. Residues 176–196 form a helical membrane-spanning segment; sequence AFLGFCGFMFRQTNIIWAVFC. Residues 197-256 lie on the Cytoplasmic side of the membrane; it reads AGNVIAQKLTEAWKTELQKKEDRLPPIKGPFAEFRKILQFLLAYSMSFKNLSMLFCLTWP. A helical membrane pass occupies residues 257-277; the sequence is YILLGFLFCAFVVVNGGIVIG. At 278–283 the chain is on the extracellular side; the sequence is DRSSHE. A helical membrane pass occupies residues 284-304; sequence ACLHFPQLFYFFSFTLFFSFP. The Cytoplasmic portion of the chain corresponds to 305-317; that stretch reads HLLSPSKIKTFLS. The helical transmembrane segment at 318-338 threads the bilayer; the sequence is LVWKHGILFLVVTLVSVFLVW. At 339–365 the chain is on the extracellular side; the sequence is KFTYAHKYLLADNRHYTFYVWKRVFQR. The helical transmembrane segment at 366–386 threads the bilayer; it reads YAILKYLLVPAYIFAGWSIAD. Over 387–392 the chain is Cytoplasmic; that stretch reads SLKSKP. A helical transmembrane segment spans residues 393-413; it reads IFWNLMFFICLFIVIVPQKLL. At 414-436 the chain is on the extracellular side; it reads EFRYFILPYVIYRLNITLPPTSR. The helical transmembrane segment at 437–457 threads the bilayer; sequence LVCELSCYAIVNFITFYIFLN. Over 458 to 473 the chain is Cytoplasmic; the sequence is KTFQWPNSQDIQRFMW.

Belongs to the ALG10 glucosyltransferase family. In terms of assembly, interacts with KCNH1; may regulate KCNH1, possibly by regulating its N-glycosylation. Interacts with KCNH2; may reduce KCNH2 sensitivity to classic proarrhythmic drug blockade, possibly by regulating its N-glycosylation. In terms of tissue distribution, highly expressed in heart, placenta, liver, kidney and pancreas. Weakly expressed in lung, skeletal muscle and brain.

Its subcellular location is the endoplasmic reticulum membrane. The enzyme catalyses an alpha-D-Glc-(1-&gt;3)-alpha-D-Glc-(1-&gt;3)-alpha-D-Man-(1-&gt;2)-alpha-D-Man-(1-&gt;2)-alpha-D-Man-(1-&gt;3)-[alpha-D-Man-(1-&gt;2)-alpha-D-Man-(1-&gt;3)-[alpha-D-Man-(1-&gt;2)-alpha-D-Man-(1-&gt;6)]-alpha-D-Man-(1-&gt;6)]-beta-D-Man-(1-&gt;4)-beta-D-GlcNAc-(1-&gt;4)-alpha-D-GlcNAc-diphospho-di-trans,poly-cis-dolichol + a di-trans,poly-cis-dolichyl beta-D-glucosyl phosphate = a alpha-D-Glc-(1-&gt;2)-alpha-D-Glc-(1-&gt;3)-alpha-D-Glc-(1-&gt;3)-alpha-D-Man-(1-&gt;2)-alpha-D-Man-(1-&gt;2)-alpha-D-Man-(1-&gt;3)-[alpha-D-Man-(1-&gt;2)-alpha-D-Man-(1-&gt;3)-[alpha-D-Man-(1-&gt;2)-alpha-D-Man-(1-&gt;6)]-alpha-D-Man-(1-&gt;6)]-beta-D-Man-(1-&gt;4)-beta-D-GlcNAc-(1-&gt;4)-alpha-D-GlcNAc-diphospho-di-trans,poly-cis-dolichol + a di-trans,poly-cis-dolichyl phosphate + H(+). The protein operates within protein modification; protein glycosylation. In terms of biological role, dol-P-Glc:Glc(2)Man(9)GlcNAc(2)-PP-Dol alpha-1,2-glucosyltransferase that operates in the biosynthetic pathway of dolichol-linked oligosaccharides, the glycan precursors employed in protein asparagine (N)-glycosylation. The assembly of dolichol-linked oligosaccharides begins on the cytosolic side of the endoplasmic reticulum membrane and finishes in its lumen. The sequential addition of sugars to dolichol pyrophosphate produces dolichol-linked oligosaccharides containing fourteen sugars, including two GlcNAcs, nine mannoses and three glucoses. Once assembled, the oligosaccharide is transferred from the lipid to nascent proteins by oligosaccharyltransferases. In the lumen of the endoplasmic reticulum, adds the third and last glucose residue from dolichyl phosphate glucose (Dol-P-Glc) onto the lipid-linked oligosaccharide intermediate Glc(2)Man(9)GlcNAc(2)-PP-Dol to produce Glc(3)Man(9)GlcNAc(2)-PP-Dol. This Homo sapiens (Human) protein is Dol-P-Glc:Glc(2)Man(9)GlcNAc(2)-PP-Dol alpha-1,2-glucosyltransferase.